Here is a 452-residue protein sequence, read N- to C-terminus: Keratin, type I cytoskeletal 15 (452 aa).

The segment at 1–97 (MATTFLQTSS…GGDGGLLSGN (97 aa)) is head. Ser-15, Ser-16, Ser-28, Ser-33, and Ser-47 each carry phosphoserine. Residues 98–133 (EKVTMQNLNDRLASYLDKVRALEQANTELEVKIRDW) are coil 1A. One can recognise an IF rod domain in the interval 98–410 (EKVTMQNLND…NLLEGQDAKM (313 aa)). Position 124 is a phosphothreonine (Thr-124). The interval 134 to 152 (YQKQSPASPDRDYSHYFKT) is linker 1. Positions 153–244 (MEEIRDKILA…KNHEEEMKEF (92 aa)) are coil 1B. The segment at 245–264 (SSQLAGQVNVEMDAAPGVDL) is linker 12. Positions 265-406 (TRMLAEMREQ…ATYRNLLEGQ (142 aa)) are coil 2. Lys-293 participates in a covalent cross-link: Glycyl lysine isopeptide (Lys-Gly) (interchain with G-Cter in SUMO2). 2 positions are modified to phosphothreonine: Thr-294 and Thr-316. The interval 407–452 (DAKMAGIGVREGSSGGGGSSSSSSNFHISVEESVDGKVVSSRKREI) is tail. Residues 413–452 (IGVREGSSGGGGSSSSSSNFHISVEESVDGKVVSSRKREI) form a disordered region. Lys-443 participates in a covalent cross-link: Glycyl lysine isopeptide (Lys-Gly) (interchain with G-Cter in SUMO1); alternate. Lys-443 is covalently cross-linked (Glycyl lysine isopeptide (Lys-Gly) (interchain with G-Cter in SUMO2); alternate).

Belongs to the intermediate filament family. Heterotetramer of two type I and two type II keratins. Forms a heterodimer with KRT14. Interacts with PLEC isoform 1C, when in a heterodimer with KRT14. Interacts with NOD2. In terms of tissue distribution, expressed strongly in the basal cell layer at the tips of rete-like prominences (RLPs) of adult dorsal tongue, outer root sheath (ORS) of hair follicle and skin epidermis (at protein level).

In terms of biological role, in the absence of KRT14, makes a bona fide, but ultrastructurally distinct keratin filament network with KRT5. The chain is Keratin, type I cytoskeletal 15 (Krt15) from Mus musculus (Mouse).